Consider the following 238-residue polypeptide: RNA-binding protein pno1 (238 aa).

A KH domain is found at 162-211 (QSRAIGRLAGKGGRTKFTIENVTKTRIVLADSKIHILGSYQNIQLARRAI).

It belongs to the PNO1 family.

It is found in the nucleus. The protein localises to the nucleolus. The sequence is that of RNA-binding protein pno1 (l(1)G0004) from Drosophila pseudoobscura pseudoobscura (Fruit fly).